A 185-amino-acid polypeptide reads, in one-letter code: Large ribosomal subunit protein uL13 (185 aa).

The protein belongs to the universal ribosomal protein uL13 family. As to quaternary structure, part of the 50S ribosomal subunit.

In terms of biological role, this protein is one of the early assembly proteins of the 50S ribosomal subunit, although it is not seen to bind rRNA by itself. It is important during the early stages of 50S assembly. In Pyrobaculum islandicum (strain DSM 4184 / JCM 9189 / GEO3), this protein is Large ribosomal subunit protein uL13.